Reading from the N-terminus, the 89-residue chain is Small ribosomal subunit protein uS15 (89 aa).

It belongs to the universal ribosomal protein uS15 family. As to quaternary structure, part of the 30S ribosomal subunit. Forms a bridge to the 50S subunit in the 70S ribosome, contacting the 23S rRNA.

Functionally, one of the primary rRNA binding proteins, it binds directly to 16S rRNA where it helps nucleate assembly of the platform of the 30S subunit by binding and bridging several RNA helices of the 16S rRNA. Forms an intersubunit bridge (bridge B4) with the 23S rRNA of the 50S subunit in the ribosome. The protein is Small ribosomal subunit protein uS15 of Desulforapulum autotrophicum (strain ATCC 43914 / DSM 3382 / VKM B-1955 / HRM2) (Desulfobacterium autotrophicum).